A 322-amino-acid chain; its full sequence is RNA pseudouridine synthase 1 (322 aa).

Aspartate 120 is an active-site residue.

Belongs to the pseudouridine synthase RluA family.

It catalyses the reaction a uridine in RNA = a pseudouridine in RNA. In Arabidopsis thaliana (Mouse-ear cress), this protein is RNA pseudouridine synthase 1.